The following is a 158-amino-acid chain: Crossover junction endodeoxyribonuclease RuvC (158 aa).

Residues Asp-7, Glu-66, and Asp-139 contribute to the active site. Mg(2+) contacts are provided by Asp-7, Glu-66, and Asp-139.

Belongs to the RuvC family. As to quaternary structure, homodimer which binds Holliday junction (HJ) DNA. The HJ becomes 2-fold symmetrical on binding to RuvC with unstacked arms; it has a different conformation from HJ DNA in complex with RuvA. In the full resolvosome a probable DNA-RuvA(4)-RuvB(12)-RuvC(2) complex forms which resolves the HJ. It depends on Mg(2+) as a cofactor.

The protein resides in the cytoplasm. The catalysed reaction is Endonucleolytic cleavage at a junction such as a reciprocal single-stranded crossover between two homologous DNA duplexes (Holliday junction).. In terms of biological role, the RuvA-RuvB-RuvC complex processes Holliday junction (HJ) DNA during genetic recombination and DNA repair. Endonuclease that resolves HJ intermediates. Cleaves cruciform DNA by making single-stranded nicks across the HJ at symmetrical positions within the homologous arms, yielding a 5'-phosphate and a 3'-hydroxyl group; requires a central core of homology in the junction. The consensus cleavage sequence is 5'-(A/T)TT(C/G)-3'. Cleavage occurs on the 3'-side of the TT dinucleotide at the point of strand exchange. HJ branch migration catalyzed by RuvA-RuvB allows RuvC to scan DNA until it finds its consensus sequence, where it cleaves and resolves the cruciform DNA. This chain is Crossover junction endodeoxyribonuclease RuvC, found in Campylobacter hominis (strain ATCC BAA-381 / DSM 21671 / CCUG 45161 / LMG 19568 / NCTC 13146 / CH001A).